We begin with the raw amino-acid sequence, 318 residues long: Melanoma-associated antigen 8 (318 aa).

The interval M1–H103 is disordered. The MAGE domain maps to L112–A311.

As to expression, expressed in many tumors of several types, such as melanoma, head and neck squamous cell carcinoma, lung carcinoma and breast carcinoma, but not in normal tissues except for testis and placenta.

Its function is as follows. Not known, though may play a role in embryonal development and tumor transformation or aspects of tumor progression. The polypeptide is Melanoma-associated antigen 8 (MAGEA8) (Homo sapiens (Human)).